Consider the following 162-residue polypeptide: Caveolin-2 (162 aa).

Topologically, residues 1 to 86 are cytoplasmic; sequence MGLETEKADV…FEISKYVIYK (86 aa). Phosphotyrosine; by SRC is present on tyrosine 19. Phosphoserine is present on residues serine 20 and serine 23. Position 27 is a phosphotyrosine; by SRC (tyrosine 27). Residue serine 36 is modified to Phosphoserine. Residues 87–107 constitute an intramembrane region (helical); it reads FLTVFLAIPLAFTAGILFATL. Topologically, residues 108–162 are cytoplasmic; sequence SCLHIWIIMPFVKTCLMVLPSVQTIWRSVTDVIIAPLCTSIGRICSSVSLQVSHD.

Belongs to the caveolin family. In terms of assembly, monomer or homodimer. Interacts with CAV1; the interaction forms a stable heterooligomeric complex that is required for targeting to lipid rafts and for caveolae formation. Tyrosine phosphorylated forms do not form heterooligomers with the Tyr-19-phosphorylated form existing as a monomer or dimer, and the Tyr-27-form as a monomer only. Interacts (tyrosine phosphorylated form) with the SH2 domain-containing proteins, RASA1, NCK1 and SRC. Interacts (tyrosine phosphorylated form) with INSR, the interaction (Tyr-27-phosphorylated form) is increased on insulin stimulation. Interacts (Tyr-19 phosphorylated form) with MAPK1 (phosphorylated form); the interaction, promoted by insulin, leads to nuclear location and MAPK1 activation. Interacts with STAT3; the interaction is increased on insulin-induced tyrosine phosphorylation leading to STAT activation. Post-translationally, phosphorylated on serine and tyrosine residues. CAV1 promotes phosphorylation on Ser-23 which then targets the complex to the plasma membrane, lipid rafts and caveolae. Phosphorylation on Ser-36 appears to modulate mitosis in endothelial cells. Phosphorylation on both Tyr-19 and Tyr-27 is required for insulin-induced 'Ser-727' phosphorylation of STAT3 and its activation. Phosphorylation on Tyr-19 is required for insulin-induced phosphorylation of MAPK1 and DNA binding of STAT3. Tyrosine phosphorylation is induced by both EGF and insulin (By. similarity).

The protein resides in the nucleus. It localises to the cytoplasm. Its subcellular location is the golgi apparatus membrane. The protein localises to the cell membrane. It is found in the membrane. The protein resides in the caveola. May act as a scaffolding protein within caveolar membranes. Interacts directly with G-protein alpha subunits and can functionally regulate their activity. Acts as an accessory protein in conjunction with CAV1 in targeting to lipid rafts and driving caveolae formation. The Ser-36 phosphorylated form has a role in modulating mitosis in endothelial cells. Positive regulator of cellular mitogenesis of the MAPK signaling pathway. Required for the insulin-stimulated nuclear translocation and activation of MAPK1 and STAT3, and the subsequent regulation of cell cycle progression. The chain is Caveolin-2 (CAV2) from Atelerix albiventris (Middle-African hedgehog).